The primary structure comprises 356 residues: Peptide chain release factor 1 (356 aa).

Gln235 is modified (N5-methylglutamine).

It belongs to the prokaryotic/mitochondrial release factor family. Post-translationally, methylated by PrmC. Methylation increases the termination efficiency of RF1.

The protein localises to the cytoplasm. Its function is as follows. Peptide chain release factor 1 directs the termination of translation in response to the peptide chain termination codons UAG and UAA. The polypeptide is Peptide chain release factor 1 (Hydrogenobaculum sp. (strain Y04AAS1)).